The following is a 105-amino-acid chain: Large ribosomal subunit protein uL24 (105 aa).

It belongs to the universal ribosomal protein uL24 family. Part of the 50S ribosomal subunit.

In terms of biological role, one of two assembly initiator proteins, it binds directly to the 5'-end of the 23S rRNA, where it nucleates assembly of the 50S subunit. One of the proteins that surrounds the polypeptide exit tunnel on the outside of the subunit. This chain is Large ribosomal subunit protein uL24, found in Clostridium botulinum (strain Langeland / NCTC 10281 / Type F).